The sequence spans 666 residues: Zinc finger protein 710 (666 aa).

Glycyl lysine isopeptide (Lys-Gly) (interchain with G-Cter in SUMO2) cross-links involve residues Lys-110 and Lys-113. Positions 113–141 (KAEEEEEQEVYEVSVPGDDKDPGPAEAPA) are disordered. 3 C2H2-type zinc fingers span residues 297 to 319 (WQCRMCEKSYTSKYNLVTHILGH), 325 to 347 (HSCPHCSKLFKQPSHLQTHLLTH), and 353 to 375 (HKCQVCHKAFTQTSHLKRHMLLH). Lys-379 participates in a covalent cross-link: Glycyl lysine isopeptide (Lys-Gly) (interchain with G-Cter in SUMO2). C2H2-type zinc fingers lie at residues 381–403 (YSCHFCGRGFAYPSELKAHEVKH), 409–431 (HVCVECGLDFSTLTQLKRHLASH), 437–459 (YQCLECDKSFHYRSQLQNHMLKH), 465–487 (FVCTECGMEFSQIHHLKQHSLTH), 493–515 (FKCEVCGREFTLQANMKRHMLIH), 521–543 (YQCHICFKTFVQKQTLKTHMIVH), 549–571 (FKCKVCGKSFNRMYNLLGHMHLH), and 577–600 (FKCPYCSSKFNLKGNLSRHMKVKH).

This sequence belongs to the krueppel C2H2-type zinc-finger protein family.

The protein localises to the nucleus. May be involved in transcriptional regulation. The polypeptide is Zinc finger protein 710 (Znf710) (Mus musculus (Mouse)).